Here is a 245-residue protein sequence, read N- to C-terminus: Probable 2-phosphosulfolactate phosphatase (245 aa).

It belongs to the ComB family. Mg(2+) is required as a cofactor.

It carries out the reaction (2R)-O-phospho-3-sulfolactate + H2O = (2R)-3-sulfolactate + phosphate. This Nostoc sp. (strain PCC 7120 / SAG 25.82 / UTEX 2576) protein is Probable 2-phosphosulfolactate phosphatase.